A 343-amino-acid chain; its full sequence is Dihydroorotate dehydrogenase (quinone) (343 aa).

FMN contacts are provided by residues 65–69 (AGFDK) and T89. A substrate-binding site is contributed by K69. Residue 114–118 (NRMGF) coordinates substrate. The FMN site is built by N145 and N178. Position 178 (N178) interacts with substrate. Residue S181 is the Nucleophile of the active site. N183 provides a ligand contact to substrate. 2 residues coordinate FMN: K215 and T243. 244–245 (NT) is a substrate binding site. Residues G269, G298, and 319–320 (YT) contribute to the FMN site.

It belongs to the dihydroorotate dehydrogenase family. Type 2 subfamily. Monomer. FMN is required as a cofactor.

It is found in the cell membrane. It catalyses the reaction (S)-dihydroorotate + a quinone = orotate + a quinol. It participates in pyrimidine metabolism; UMP biosynthesis via de novo pathway; orotate from (S)-dihydroorotate (quinone route): step 1/1. Functionally, catalyzes the conversion of dihydroorotate to orotate with quinone as electron acceptor. The chain is Dihydroorotate dehydrogenase (quinone) from Leifsonia xyli subsp. xyli (strain CTCB07).